Consider the following 23-residue polypeptide: Magainin-R1 (23 aa).

In terms of tissue distribution, expressed by the skin glands.

It localises to the secreted. Functionally, antimicrobial peptide. The chain is Magainin-R1 from Xenopus ruwenzoriensis (Uganda clawed frog).